The primary structure comprises 741 residues: Chromosome transmission fidelity protein 18 (741 aa).

183 to 190 (GPPGIGKT) provides a ligand contact to ATP.

The protein belongs to the activator 1 small subunits family. CTF18 subfamily. Component of the CTF18-RFC complex, which consists of CTF18, CTF8, DCC1, RFC2, RFC3, RFC4 and RFC5. CTF18 interacts with ECO1.

Its subcellular location is the nucleus. Essential for the fidelity of chromosome transmission. Required for the DNA replication block checkpoint. Component of the RFC-like complex CTF18-RFC which is required for efficient establishment of chromosome cohesion during S-phase and may load or unload POL30/PCNA. During a clamp loading circle, the RFC:clamp complex binds to DNA and the recognition of the double-stranded/single-stranded junction stimulates ATP hydrolysis by RFC. The complex presumably provides bipartite ATP sites in which one subunit supplies a catalytic site for hydrolysis of ATP bound to the neighboring subunit. Dissociation of RFC from the clamp leaves the clamp encircling DNA. This is Chromosome transmission fidelity protein 18 (CTF18) from Saccharomyces cerevisiae (strain ATCC 204508 / S288c) (Baker's yeast).